Here is a 148-residue protein sequence, read N- to C-terminus: Lysozyme C-2 (148 aa).

Positions 1-18 are cleaved as a signal peptide; that stretch reads MKTLLTLGLLLLSVTAQA. Residues 19-148 enclose the C-type lysozyme domain; sequence KVYERCEFAR…LSQYIRNCGV (130 aa). 4 disulfides stabilise this stretch: Cys-24-Cys-146, Cys-48-Cys-134, Cys-83-Cys-99, and Cys-95-Cys-113. Active-site residues include Glu-53 and Asp-71.

It belongs to the glycosyl hydrolase 22 family. In terms of assembly, monomer. Expressed weakly in myeloblasts, moderately in immature macrophages, and strongly in both mature macrophages and macrophage-rich tissues.

The protein localises to the secreted. It carries out the reaction Hydrolysis of (1-&gt;4)-beta-linkages between N-acetylmuramic acid and N-acetyl-D-glucosamine residues in a peptidoglycan and between N-acetyl-D-glucosamine residues in chitodextrins.. Its function is as follows. Lysozymes have primarily a bacteriolytic function; those in tissues and body fluids are associated with the monocyte-macrophage system and enhance the activity of immunoagents. Lyz2 is active against a range of Gram-positive and Gram-negative bacteria. More effective than Lyz1 in killing Gram-negative bacteria. Lyz1 and Lyz2 are equally effective in killing Gram-positive bacteria. This Mus musculus (Mouse) protein is Lysozyme C-2 (Lyz2).